The following is a 3649-amino-acid chain: N-(5-amino-5-carboxypentanoyl)-L-cysteinyl-D-valine synthase (3649 aa).

Residues 401 to 861 (SRDRAYVTYT…LAGHLESQGH (461 aa)) are domain 1 (adipate-activating). Carrier domains are found at residues 783 to 860 (APLL…ESQG), 1859 to 1936 (APVS…QAAA), and 2909 to 2984 (APRD…LSGL). An O-(pantetheine 4'-phosphoryl)serine mark is found at Ser820, Ser1896, and Ser2944. The segment at 1014–1937 (HHIILDGWSL…QAEHIQAAAL (924 aa)) is domain 2 (cysteine-activating). Residues 2079-2985 (HHSCFDGWSW…FVDNVLSGLA (907 aa)) form a domain 3 (valine-activating) region. Residue Ser3502 is the For thioesterase activity of the active site.

It belongs to the ATP-dependent AMP-binding enzyme family. Requires pantetheine 4'-phosphate as cofactor.

It catalyses the reaction L-2-aminoadipate + L-valine + L-cysteine + 3 ATP + H2O = N-[(5S)-5-amino-5-carboxypentanoyl]-L-cysteinyl-D-valine + 3 AMP + 3 diphosphate + 3 H(+). The protein operates within antibiotic biosynthesis; penicillin G biosynthesis; penicillin G from L-alpha-aminoadipate and L-cysteine and L-valine: step 1/3. Functionally, each of the constituent amino acids of the tripeptide acv are activated as aminoacyl-adenylates with peptide bonds formed through the participation of amino acid thioester intermediates. The polypeptide is N-(5-amino-5-carboxypentanoyl)-L-cysteinyl-D-valine synthase (pcbAB) (Amycolatopsis lactamdurans (Nocardia lactamdurans)).